The primary structure comprises 337 residues: MGQYLTKTEESSLNYVDLPDTVHRKIFEYLNPWEIFKLSRISKAIHVTILKNKKFAVKDIDLCTDENILKFQFQFVNNIVLSWEFYNLHEKPYFTSQFSNRCQYRQQYDIKNYYENPEEAFLFAFRNALSIFNVQNSKLKRFYLAPSKLELFFKLPYSFIDGRNCENLSIWNKKANDEDERDFSINFAKAVLEKMGVVRNLRLLFNCSTKDNEFDCEKEYYNSETDKLMPNDWYLYNKFDDIDLNVFLKNWLNFRDPLIRKFRIRGKRNFNTAIIFDGIETIPWDQRNGLNVYYYSATANDTGSLIFQANENHAIVKVGAINGNESSGYMEFLFITF.

The F-box domain maps to 12-60; the sequence is SLNYVDLPDTVHRKIFEYLNPWEIFKLSRISKAIHVTILKNKKFAVKDI.

This is an uncharacterized protein from Caenorhabditis elegans.